Here is a 602-residue protein sequence, read N- to C-terminus: Spermidine-citrate ligase (602 aa).

Residues 286–288 (SLR), Lys300, and Arg312 contribute to the ATP site.

It belongs to the IucA/IucC family.

It catalyses the reaction spermidine + citrate + ATP = N(8)-citryl-spermidine + AMP + diphosphate + H(+). It functions in the pathway siderophore biosynthesis; petrobactin biosynthesis. In terms of biological role, involved in the biosynthesis of petrobactin, a catecholate siderophore that functions in both iron acquisition and virulence. Catalyzes the ATP-dependent condensation of citric acid and spermidine to form N(8)-citryl-spermidine. It can also catalyze the condensation of several di- and triamine analogs of spermidine with citric acid and the condensation of the citric acid analog tricarballylic acid with spermidine. Required for growth in iron-depleted medium and for full virulence in a mouse model of infection. The protein is Spermidine-citrate ligase of Bacillus anthracis.